The primary structure comprises 1052 residues: Eukaryotic translation initiation factor 3 subunit A (1052 aa).

Positions 92 to 121 form a coiled coil; the sequence is LKKFIELAEKKVTEAQAKADEIQSSLESAA. Residues 339-523 enclose the PCI domain; sequence MTKAASFVLL…GVLTFDTDVF (185 aa). Residues 580 to 906 are a coiled coil; it reads EARLQAKRAA…AEARRAARRT (327 aa). 2 stretches are compositionally biased toward basic and acidic residues: residues 617–632 and 794–901; these read AATDALQRKQREEETR and KEVS…EARR. 2 disordered regions span residues 617-646 and 794-1052; these read AATDALQRKQREEETRKRIRTQQLQEAEKQ and KEVS…QGGQ. 2 stretches are compositionally biased toward low complexity: residues 905–927 and 948–964; these read RTGGAEPEAAPERAAPTERTAPR and KEAAGGTPAAPAAAAPE. Residues 1013-1028 are compositionally biased toward polar residues; the sequence is GSSQPPSRTQTPGSSS.

It belongs to the eIF-3 subunit A family. Component of the eukaryotic translation initiation factor 3 (eIF-3) complex.

It localises to the cytoplasm. In terms of biological role, RNA-binding component of the eukaryotic translation initiation factor 3 (eIF-3) complex, which is involved in protein synthesis of a specialized repertoire of mRNAs and, together with other initiation factors, stimulates binding of mRNA and methionyl-tRNAi to the 40S ribosome. The eIF-3 complex specifically targets and initiates translation of a subset of mRNAs involved in cell proliferation. The protein is Eukaryotic translation initiation factor 3 subunit A (tif32) of Aspergillus niger (strain ATCC MYA-4892 / CBS 513.88 / FGSC A1513).